The following is an 839-amino-acid chain: Glycerol-3-phosphate acyltransferase (839 aa).

Positions 309–314 (CHRSHI) match the HXXXXD motif motif.

It belongs to the GPAT/DAPAT family.

It localises to the cell inner membrane. The catalysed reaction is sn-glycerol 3-phosphate + an acyl-CoA = a 1-acyl-sn-glycero-3-phosphate + CoA. The protein operates within phospholipid metabolism; CDP-diacylglycerol biosynthesis; CDP-diacylglycerol from sn-glycerol 3-phosphate: step 1/3. In Pseudomonas fluorescens (strain SBW25), this protein is Glycerol-3-phosphate acyltransferase.